Reading from the N-terminus, the 264-residue chain is Protein-lysine methyltransferase METTL21C (264 aa).

Polar residues predominate over residues 1-10 (MDVCLSSAQQ). Residues 1–46 (MDVCLSSAQQPGRRGEGLSSPGGWLEAEKKGAPQKDSTGGVLEESN) form a disordered region. Residues Trp92, 120–122 (GAG), Asp141, Trp172, and Ser193 each bind S-adenosyl-L-methionine.

It belongs to the methyltransferase superfamily. METTL21 family. As to quaternary structure, interacts with members of the heat shock protein 70 families; these proteins may possibly be methylation substrates for the enzyme.

The protein localises to the nucleus. It localises to the cytoplasm. It carries out the reaction L-lysyl-[protein] + S-adenosyl-L-methionine = N(6)-methyl-L-lysyl-[protein] + S-adenosyl-L-homocysteine + H(+). The catalysed reaction is N(6)-methyl-L-lysyl-[protein] + S-adenosyl-L-methionine = N(6),N(6)-dimethyl-L-lysyl-[protein] + S-adenosyl-L-homocysteine + H(+). It catalyses the reaction N(6),N(6)-dimethyl-L-lysyl-[protein] + S-adenosyl-L-methionine = N(6),N(6),N(6)-trimethyl-L-lysyl-[protein] + S-adenosyl-L-homocysteine + H(+). Protein-lysine N-methyltransferase using S-adenosyl-L-methionine as methyl donor. Mono-di and trimethylates 'Lys-943' of AARS1. The protein is Protein-lysine methyltransferase METTL21C of Homo sapiens (Human).